The primary structure comprises 419 residues: UDP-N-acetylglucosamine 1-carboxyvinyltransferase (419 aa).

Residue 22–23 (KN) participates in phosphoenolpyruvate binding. Arg-93 is a binding site for UDP-N-acetyl-alpha-D-glucosamine. Cys-117 serves as the catalytic Proton donor. Cys-117 carries the post-translational modification 2-(S-cysteinyl)pyruvic acid O-phosphothioketal. Positions 307 and 329 each coordinate UDP-N-acetyl-alpha-D-glucosamine.

It belongs to the EPSP synthase family. MurA subfamily.

Its subcellular location is the cytoplasm. It carries out the reaction phosphoenolpyruvate + UDP-N-acetyl-alpha-D-glucosamine = UDP-N-acetyl-3-O-(1-carboxyvinyl)-alpha-D-glucosamine + phosphate. It participates in cell wall biogenesis; peptidoglycan biosynthesis. Its function is as follows. Cell wall formation. Adds enolpyruvyl to UDP-N-acetylglucosamine. The polypeptide is UDP-N-acetylglucosamine 1-carboxyvinyltransferase (Shewanella piezotolerans (strain WP3 / JCM 13877)).